A 252-amino-acid polypeptide reads, in one-letter code: Triosephosphate isomerase (252 aa).

9–11 (NWK) provides a ligand contact to substrate. His-100 functions as the Electrophile in the catalytic mechanism. The Proton acceptor role is filled by Glu-171. Residues Gly-177, Ser-216, and 237–238 (GG) each bind substrate.

It belongs to the triosephosphate isomerase family. Homodimer.

The protein localises to the cytoplasm. It catalyses the reaction D-glyceraldehyde 3-phosphate = dihydroxyacetone phosphate. It participates in carbohydrate biosynthesis; gluconeogenesis. The protein operates within carbohydrate degradation; glycolysis; D-glyceraldehyde 3-phosphate from glycerone phosphate: step 1/1. In terms of biological role, involved in the gluconeogenesis. Catalyzes stereospecifically the conversion of dihydroxyacetone phosphate (DHAP) to D-glyceraldehyde-3-phosphate (G3P). This chain is Triosephosphate isomerase, found in Polynucleobacter asymbioticus (strain DSM 18221 / CIP 109841 / QLW-P1DMWA-1) (Polynucleobacter necessarius subsp. asymbioticus).